Reading from the N-terminus, the 435-residue chain is D-inositol 3-phosphate glycosyltransferase (435 aa).

Histidine 25 provides a ligand contact to 1D-myo-inositol 3-phosphate. UDP-N-acetyl-alpha-D-glucosamine is bound by residues 31-32 (QP) and glycine 39. 1D-myo-inositol 3-phosphate contacts are provided by residues 36-41 (DAGGMN), lysine 94, tyrosine 127, threonine 151, and arginine 171. Arginine 245 and lysine 250 together coordinate UDP-N-acetyl-alpha-D-glucosamine. Tyrosine 320, arginine 321, and alanine 323 together coordinate Mg(2+). Residues glutamate 333 and glutamate 341 each contribute to the UDP-N-acetyl-alpha-D-glucosamine site. Threonine 347 lines the Mg(2+) pocket.

It belongs to the glycosyltransferase group 1 family. MshA subfamily. As to quaternary structure, homodimer.

The catalysed reaction is 1D-myo-inositol 3-phosphate + UDP-N-acetyl-alpha-D-glucosamine = 1D-myo-inositol 2-acetamido-2-deoxy-alpha-D-glucopyranoside 3-phosphate + UDP + H(+). Catalyzes the transfer of a N-acetyl-glucosamine moiety to 1D-myo-inositol 3-phosphate to produce 1D-myo-inositol 2-acetamido-2-deoxy-glucopyranoside 3-phosphate in the mycothiol biosynthesis pathway. This chain is D-inositol 3-phosphate glycosyltransferase, found in Streptosporangium roseum (strain ATCC 12428 / DSM 43021 / JCM 3005 / KCTC 9067 / NCIMB 10171 / NRRL 2505 / NI 9100).